Here is a 145-residue protein sequence, read N- to C-terminus: Small ribosomal subunit protein uS9 (145 aa).

Belongs to the universal ribosomal protein uS9 family.

The protein localises to the cytoplasm. The polypeptide is Small ribosomal subunit protein uS9 (RPS16) (Gossypium hirsutum (Upland cotton)).